A 212-amino-acid polypeptide reads, in one-letter code: uncharacterized protein (212 aa).

S-adenosyl-L-methionine contacts are provided by Gly-53, Glu-74, and Asp-97.

Belongs to the methyltransferase superfamily. YrrT family.

Could be a S-adenosyl-L-methionine-dependent methyltransferase. This is an uncharacterized protein from Bacillus mycoides (strain KBAB4) (Bacillus weihenstephanensis).